The chain runs to 388 residues: Succinate--CoA ligase [ADP-forming] subunit beta (388 aa).

One can recognise an ATP-grasp domain in the interval 9 to 244 (KALFAEYGLP…PSQDDAREAH (236 aa)). ATP-binding positions include K46, 53–55 (GRG), E99, T102, and E107. Residues N199 and D213 each contribute to the Mg(2+) site. Residues N264 and 321–323 (GIV) each bind substrate.

It belongs to the succinate/malate CoA ligase beta subunit family. In terms of assembly, heterotetramer of two alpha and two beta subunits. Mg(2+) is required as a cofactor.

The enzyme catalyses succinate + ATP + CoA = succinyl-CoA + ADP + phosphate. The catalysed reaction is GTP + succinate + CoA = succinyl-CoA + GDP + phosphate. Its pathway is carbohydrate metabolism; tricarboxylic acid cycle; succinate from succinyl-CoA (ligase route): step 1/1. Its function is as follows. Succinyl-CoA synthetase functions in the citric acid cycle (TCA), coupling the hydrolysis of succinyl-CoA to the synthesis of either ATP or GTP and thus represents the only step of substrate-level phosphorylation in the TCA. The beta subunit provides nucleotide specificity of the enzyme and binds the substrate succinate, while the binding sites for coenzyme A and phosphate are found in the alpha subunit. This chain is Succinate--CoA ligase [ADP-forming] subunit beta, found in Shewanella sediminis (strain HAW-EB3).